Reading from the N-terminus, the 303-residue chain is ATP phosphoribosyltransferase (303 aa).

This sequence belongs to the ATP phosphoribosyltransferase family. Long subfamily. The cofactor is Mg(2+).

Its subcellular location is the cytoplasm. It carries out the reaction 1-(5-phospho-beta-D-ribosyl)-ATP + diphosphate = 5-phospho-alpha-D-ribose 1-diphosphate + ATP. It functions in the pathway amino-acid biosynthesis; L-histidine biosynthesis; L-histidine from 5-phospho-alpha-D-ribose 1-diphosphate: step 1/9. Its activity is regulated as follows. Feedback inhibited by histidine. Functionally, catalyzes the condensation of ATP and 5-phosphoribose 1-diphosphate to form N'-(5'-phosphoribosyl)-ATP (PR-ATP). Has a crucial role in the pathway because the rate of histidine biosynthesis seems to be controlled primarily by regulation of HisG enzymatic activity. This is ATP phosphoribosyltransferase from Stenotrophomonas maltophilia (strain R551-3).